A 36-amino-acid chain; its full sequence is Egg-laying hormone (36 aa).

Lys36 carries the post-translational modification Lysine amide.

The protein belongs to the molluscan ELH family. In terms of tissue distribution, bag cell neurons.

The protein localises to the secreted. ELH acts as a neurotransmitter locally, upon neurons of the abdominal ganglion and as a hormone by diffusing into the circulating hemolymph and modulating the activity of other organs. It specifically causes contraction of smooth muscle in the ovotestis and expulsion of the egg string. This chain is Egg-laying hormone, found in Aplysia fasciata (Mottled sea hare).